The primary structure comprises 495 residues: Probable cytosol aminopeptidase (495 aa).

Mn(2+) contacts are provided by lysine 258 and aspartate 263. Residue lysine 270 is part of the active site. Positions 281, 340, and 342 each coordinate Mn(2+). Residue arginine 344 is part of the active site.

The protein belongs to the peptidase M17 family. Requires Mn(2+) as cofactor.

It localises to the cytoplasm. The catalysed reaction is Release of an N-terminal amino acid, Xaa-|-Yaa-, in which Xaa is preferably Leu, but may be other amino acids including Pro although not Arg or Lys, and Yaa may be Pro. Amino acid amides and methyl esters are also readily hydrolyzed, but rates on arylamides are exceedingly low.. It catalyses the reaction Release of an N-terminal amino acid, preferentially leucine, but not glutamic or aspartic acids.. Its function is as follows. Presumably involved in the processing and regular turnover of intracellular proteins. Catalyzes the removal of unsubstituted N-terminal amino acids from various peptides. This Leptospira interrogans serogroup Icterohaemorrhagiae serovar copenhageni (strain Fiocruz L1-130) protein is Probable cytosol aminopeptidase.